The chain runs to 133 residues: MARVKRGVTAHAKHKKVLKQAEGFYGRRKNTIRAAKAAVDRSKQYAYRDRKNRKRTFRALWIQRINAAVRAEGLTYGRFIDGLSKAGIEIDRKVLSDIAIHESAAFSALVASAKKALEYLKDTTPNAFEGAVK.

Belongs to the bacterial ribosomal protein bL20 family.

Functionally, binds directly to 23S ribosomal RNA and is necessary for the in vitro assembly process of the 50S ribosomal subunit. It is not involved in the protein synthesizing functions of that subunit. This is Large ribosomal subunit protein bL20 from Bartonella henselae (strain ATCC 49882 / DSM 28221 / CCUG 30454 / Houston 1) (Rochalimaea henselae).